A 434-amino-acid chain; its full sequence is D-amino acid dehydrogenase (434 aa).

FAD is bound at residue V3–Y17.

It belongs to the DadA oxidoreductase family. The cofactor is FAD.

It carries out the reaction a D-alpha-amino acid + A + H2O = a 2-oxocarboxylate + AH2 + NH4(+). Its pathway is amino-acid degradation; D-alanine degradation; NH(3) and pyruvate from D-alanine: step 1/1. Functionally, oxidative deamination of D-amino acids. In Bordetella petrii (strain ATCC BAA-461 / DSM 12804 / CCUG 43448), this protein is D-amino acid dehydrogenase.